The sequence spans 166 residues: Regulator of ribonuclease activity A (166 aa).

This sequence belongs to the RraA family. Homotrimer. Binds to both RNA-binding sites in the C-terminal region of Rne and to RhlB.

It is found in the cytoplasm. Globally modulates RNA abundance by binding to RNase E (Rne) and regulating its endonucleolytic activity. Can modulate Rne action in a substrate-dependent manner by altering the composition of the degradosome. Modulates RNA-binding and helicase activities of the degradosome. This Mannheimia succiniciproducens (strain KCTC 0769BP / MBEL55E) protein is Regulator of ribonuclease activity A.